Reading from the N-terminus, the 202-residue chain is 3-isopropylmalate dehydratase small subunit 1 (202 aa).

The protein belongs to the LeuD family. LeuD type 1 subfamily. As to quaternary structure, heterodimer of LeuC and LeuD.

It catalyses the reaction (2R,3S)-3-isopropylmalate = (2S)-2-isopropylmalate. It functions in the pathway amino-acid biosynthesis; L-leucine biosynthesis; L-leucine from 3-methyl-2-oxobutanoate: step 2/4. Catalyzes the isomerization between 2-isopropylmalate and 3-isopropylmalate, via the formation of 2-isopropylmaleate. The protein is 3-isopropylmalate dehydratase small subunit 1 of Bordetella pertussis (strain Tohama I / ATCC BAA-589 / NCTC 13251).